A 450-amino-acid polypeptide reads, in one-letter code: Phosphoglucosamine mutase (450 aa).

Ser-100 functions as the Phosphoserine intermediate in the catalytic mechanism. Residues Ser-100, Asp-240, Asp-242, and Asp-244 each contribute to the Mg(2+) site. At Ser-100 the chain carries Phosphoserine.

This sequence belongs to the phosphohexose mutase family. Mg(2+) is required as a cofactor. Post-translationally, activated by phosphorylation.

It carries out the reaction alpha-D-glucosamine 1-phosphate = D-glucosamine 6-phosphate. Catalyzes the conversion of glucosamine-6-phosphate to glucosamine-1-phosphate. The sequence is that of Phosphoglucosamine mutase from Desulforudis audaxviator (strain MP104C).